Reading from the N-terminus, the 172-residue chain is 3-hydroxydecanoyl-[acyl-carrier-protein] dehydratase (172 aa).

Histidine 71 is an active-site residue.

The protein belongs to the thioester dehydratase family. FabA subfamily. In terms of assembly, homodimer.

Its subcellular location is the cytoplasm. It carries out the reaction a (3R)-hydroxyacyl-[ACP] = a (2E)-enoyl-[ACP] + H2O. The enzyme catalyses (3R)-hydroxydecanoyl-[ACP] = (2E)-decenoyl-[ACP] + H2O. It catalyses the reaction (2E)-decenoyl-[ACP] = (3Z)-decenoyl-[ACP]. It participates in lipid metabolism; fatty acid biosynthesis. In terms of biological role, necessary for the introduction of cis unsaturation into fatty acids. Catalyzes the dehydration of (3R)-3-hydroxydecanoyl-ACP to E-(2)-decenoyl-ACP and then its isomerization to Z-(3)-decenoyl-ACP. Can catalyze the dehydratase reaction for beta-hydroxyacyl-ACPs with saturated chain lengths up to 16:0, being most active on intermediate chain length. In Blochmanniella floridana, this protein is 3-hydroxydecanoyl-[acyl-carrier-protein] dehydratase.